The following is a 299-amino-acid chain: GTPase Era (299 aa).

An Era-type G domain is found at Lys4–Glu171. The interval Gly12–Ser19 is G1. Gly12–Ser19 contributes to the GTP binding site. Positions Gln38 to Asn42 are G2. The tract at residues Asp59–Gly62 is G3. Residues Asp59–Ile63 and Asn121–Asp124 each bind GTP. Residues Asn121–Asp124 form a G4 region. A G5 region spans residues Ile150–Ala152. The region spanning Thr202–Lys280 is the KH type-2 domain.

This sequence belongs to the TRAFAC class TrmE-Era-EngA-EngB-Septin-like GTPase superfamily. Era GTPase family. As to quaternary structure, monomer.

The protein resides in the cytoplasm. It localises to the cell membrane. In terms of biological role, an essential GTPase that binds both GDP and GTP, with rapid nucleotide exchange. Plays a role in 16S rRNA processing and 30S ribosomal subunit biogenesis and possibly also in cell cycle regulation and energy metabolism. This chain is GTPase Era, found in Streptococcus suis (strain 98HAH33).